We begin with the raw amino-acid sequence, 1603 residues long: Transcription factor Gibbin (1603 aa).

4 disordered regions span residues Pro19–Arg108, Leu150–Tyr236, Leu264–Pro285, and Cys394–Lys467. The segment covering Gly30–Pro47 has biased composition (pro residues). The residue at position 79 (Lys79) is an N6-acetyllysine. Over residues Ser166 to Arg178 the composition is skewed to polar residues. Residues Ser179 to Ser194 show a composition bias toward basic and acidic residues. Low complexity predominate over residues Pro216–Leu225. Ser268 is subject to Phosphoserine. A compositionally biased stretch (low complexity) spans Pro273–Pro285. A DNA-binding region (a.T hook 1) is located at residues Arg396–Gly408. Over residues Glu428 to Val446 the composition is skewed to pro residues. Residues Lys544 to Leu556 constitute a DNA-binding region (a.T hook 2). Residues Met581–Asp607 are disordered. Ser596 carries the phosphoserine modification. Lys609 participates in a covalent cross-link: Glycyl lysine isopeptide (Lys-Gly) (interchain with G-Cter in SUMO2). Disordered regions lie at residues Leu717–Gly792 and Leu806–Glu827. The span at Lys737–Lys746 shows a compositional bias: basic residues. Polar residues predominate over residues Tyr816–Glu827. 2 positions are modified to phosphoserine: Ser829 and Ser846. The residue at position 891 (Arg891) is an Omega-N-methylarginine. 2 positions are modified to phosphoserine: Ser896 and Ser1064. Disordered regions lie at residues Val1159–Leu1198 and Ala1253–Arg1286. Low complexity-rich tracts occupy residues Ser1160–Thr1171 and Ser1187–Leu1198. Position 1187 is a phosphoserine (Ser1187). Residues Ser1322, Ser1324, and Ser1399 each carry the phosphoserine modification. Residue Thr1401 is modified to Phosphothreonine. Position 1403 is a phosphoserine (Ser1403). Residue Lys1409 forms a Glycyl lysine isopeptide (Lys-Gly) (interchain with G-Cter in SUMO2) linkage. Positions Pro1503–Ala1533 are disordered. 2 positions are modified to phosphoserine: Ser1507 and Ser1549.

The protein resides in the nucleus. It is found in the chromosome. Functionally, transcription factor required for the proper patterning of the epidermis, which plays a key role in early epithelial morphogenesis. Directly binds promoter and enhancer regions and acts by maintaining local enhancer-promoter chromatin architecture. Interacts with many sequence-specific zinc-finger transcription factors and methyl-CpG-binding proteins to regulate the expression of mesoderm genes that wire surface ectoderm stratification. This Homo sapiens (Human) protein is Transcription factor Gibbin.